We begin with the raw amino-acid sequence, 382 residues long: Mannitol-1-phosphate 5-dehydrogenase (382 aa).

An NAD(+)-binding site is contributed by 4-15 (AVHFGAGNIGRG).

It belongs to the mannitol dehydrogenase family.

It carries out the reaction D-mannitol 1-phosphate + NAD(+) = beta-D-fructose 6-phosphate + NADH + H(+). The chain is Mannitol-1-phosphate 5-dehydrogenase from Vibrio parahaemolyticus serotype O3:K6 (strain RIMD 2210633).